A 377-amino-acid polypeptide reads, in one-letter code: Succinyl-diaminopimelate desuccinylase (377 aa).

Residue His68 participates in Zn(2+) binding. Asp70 is an active-site residue. Residue Asp101 participates in Zn(2+) binding. The Proton acceptor role is filled by Glu135. Zn(2+)-binding residues include Glu136, Glu164, and His350.

Belongs to the peptidase M20A family. DapE subfamily. In terms of assembly, homodimer. Zn(2+) is required as a cofactor. It depends on Co(2+) as a cofactor.

The enzyme catalyses N-succinyl-(2S,6S)-2,6-diaminopimelate + H2O = (2S,6S)-2,6-diaminopimelate + succinate. Its pathway is amino-acid biosynthesis; L-lysine biosynthesis via DAP pathway; LL-2,6-diaminopimelate from (S)-tetrahydrodipicolinate (succinylase route): step 3/3. Its function is as follows. Catalyzes the hydrolysis of N-succinyl-L,L-diaminopimelic acid (SDAP), forming succinate and LL-2,6-diaminopimelate (DAP), an intermediate involved in the bacterial biosynthesis of lysine and meso-diaminopimelic acid, an essential component of bacterial cell walls. The polypeptide is Succinyl-diaminopimelate desuccinylase (Acinetobacter baumannii (strain SDF)).